The primary structure comprises 256 residues: GDSL esterase/lipase CPRD49 (256 aa).

The N-terminal stretch at 1–27 is a signal peptide; that stretch reads MVGPARPQIVLFGSSIVQMSFGHGGWG. The Nucleophile role is filled by Ser15. Residues Asn49 and Asn79 are each glycosylated (N-linked (GlcNAc...) asparagine). His213 is an active-site residue. A glycan (N-linked (GlcNAc...) asparagine) is linked at Asn243.

Belongs to the 'GDSL' lipolytic enzyme family. In terms of tissue distribution, specifically expressed in anthers (stages 8-12).

The protein localises to the secreted. This Arabidopsis thaliana (Mouse-ear cress) protein is GDSL esterase/lipase CPRD49 (CPRD49).